The following is a 525-amino-acid chain: uncharacterized protein (525 aa).

The signal sequence occupies residues 1 to 21; that stretch reads MLECLSALLVLFAGGGGSVLA. Residues 22 to 448 are Extracellular-facing; the sequence is AVQSKTVADP…ISAASQLDKR (427 aa). The tract at residues 242–264 is disordered; that stretch reads KVSSENCSKDTDDKSGSKKERNT. A helical membrane pass occupies residues 449–469; the sequence is IFIFTAITVSITTLMMLGFSY. At 470–525 the chain is on the cytoplasmic side; sequence RSRVSFRDHSIDDSDDDNDWSDDEVEFDEEYFYSLPVSIPEKGISLDKMAQQLGVE.

It localises to the membrane. This is an uncharacterized protein from Saccharomyces cerevisiae (strain YJM789) (Baker's yeast).